An 88-amino-acid chain; its full sequence is Putative membrane protein insertion efficiency factor (88 aa).

The tract at residues 66–88 (DFVPPKKEKNADSEHSCKAHHHH) is disordered. The span at 69–82 (PPKKEKNADSEHSC) shows a compositional bias: basic and acidic residues.

It belongs to the UPF0161 family.

The protein localises to the cell membrane. In terms of biological role, could be involved in insertion of integral membrane proteins into the membrane. This is Putative membrane protein insertion efficiency factor from Listeria monocytogenes serotype 4b (strain CLIP80459).